A 92-amino-acid polypeptide reads, in one-letter code: Probable glutathione transferase (92 aa).

In terms of domain architecture, GST N-terminal spans 1 to 71 (RTCPYAQRAR…YLEEAFPDPP (71 aa)). The Nucleophile role is filled by cysteine 3. Residues lysine 30, valine 43, and 55–56 (ES) contribute to the glutathione site.

Belongs to the GST superfamily. Omega family.

It carries out the reaction RX + glutathione = an S-substituted glutathione + a halide anion + H(+). It catalyses the reaction L-dehydroascorbate + 2 glutathione = glutathione disulfide + L-ascorbate. The enzyme catalyses methylarsonate + 2 glutathione + H(+) = methylarsonous acid + glutathione disulfide + H2O. In terms of biological role, exhibits glutathione-dependent thiol transferase activity. Has dehydroascorbate reductase activity and may contribute to the recycling of ascorbic acid. Participates in the biotransformation of inorganic arsenic and reduces monomethylarsonic acid (MMA). The polypeptide is Probable glutathione transferase (Aplysia californica (California sea hare)).